The primary structure comprises 292 residues: Norajmaline N-methyltransferase (292 aa).

The segment at 71–80 (KNMLDIGCGV) is SAM motif I. The segment at 134 to 142 (KDGTFDLVL) is SAM motif II. The Vacuolar targeting signal signature appears at 135 to 141 (DGTFDLV). The tract at residues 161-170 (IRVAAPGAPI) is SAM motif III.

The protein belongs to the class I-like SAM-binding methyltransferase superfamily. gTMT family. In terms of assembly, homodimer. In terms of tissue distribution, mainly expressed in mature roots and, to a lesser extent, in leaves, stems and flowers.

The protein resides in the vacuole membrane. The enzyme catalyses norajmaline + S-adenosyl-L-methionine = ajmaline + S-adenosyl-L-homocysteine + H(+). The catalysed reaction is 4-methylnorajmaline + S-adenosyl-L-methionine = 4-methylajmaline + S-adenosyl-L-homocysteine + H(+). It functions in the pathway alkaloid biosynthesis; ajmaline biosynthesis. N-methyltransferase involved in the biosynthesis of ajmaline-type monoterpenoid indole alkaloids (MIAs) natural products, important plant-derived pharmaceuticals used in the therapy of heart disorders. Catalyzes the indole N-methylation of norajmaline to produce ajmaline. Also able, with a lower efficiency, to mediates the conversion of 4-methylnorajmaline to 4-methylajmaline. The protein is Norajmaline N-methyltransferase of Rauvolfia serpentina (Serpentine wood).